The sequence spans 302 residues: Glutaminase (302 aa).

Residues S61, N111, E155, N162, Y186, Y238, and V256 each coordinate substrate.

The protein belongs to the glutaminase family. As to quaternary structure, homotetramer.

The enzyme catalyses L-glutamine + H2O = L-glutamate + NH4(+). In Pseudomonas aeruginosa (strain ATCC 15692 / DSM 22644 / CIP 104116 / JCM 14847 / LMG 12228 / 1C / PRS 101 / PAO1), this protein is Glutaminase.